The sequence spans 204 residues: Recombination protein RecR (204 aa).

A C4-type zinc finger spans residues 59–74 (CTRCNTFTELEICGTC). One can recognise a Toprim domain in the interval 82–181 (TLLCVVETPA…KVSRLARGVP (100 aa)).

This sequence belongs to the RecR family.

Its function is as follows. May play a role in DNA repair. It seems to be involved in an RecBC-independent recombinational process of DNA repair. It may act with RecF and RecO. The sequence is that of Recombination protein RecR from Cupriavidus metallidurans (strain ATCC 43123 / DSM 2839 / NBRC 102507 / CH34) (Ralstonia metallidurans).